We begin with the raw amino-acid sequence, 173 residues long: Shikimate kinase (173 aa).

14–19 contributes to the ATP binding site; sequence GAGKST. Ser18 is a binding site for Mg(2+). Substrate contacts are provided by Asp36, Arg60, and Gly82. Arg120 serves as a coordination point for ATP. Arg139 is a substrate binding site. An ATP-binding site is contributed by Gln156.

This sequence belongs to the shikimate kinase family. Monomer. Mg(2+) serves as cofactor.

The protein resides in the cytoplasm. The catalysed reaction is shikimate + ATP = 3-phosphoshikimate + ADP + H(+). It participates in metabolic intermediate biosynthesis; chorismate biosynthesis; chorismate from D-erythrose 4-phosphate and phosphoenolpyruvate: step 5/7. Its function is as follows. Catalyzes the specific phosphorylation of the 3-hydroxyl group of shikimic acid using ATP as a cosubstrate. This Actinobacillus pleuropneumoniae serotype 5b (strain L20) protein is Shikimate kinase.